The following is a 571-amino-acid chain: Hemagglutinin-neuraminidase (571 aa).

Over 1-26 the chain is Intravirion; that stretch reads MDRAVGRVALENEEREAKNTWRFVFR. The helical transmembrane segment at 27 to 47 threads the bilayer; sequence IAIFLLIVITLAISAAALVYS. The Virion surface portion of the chain corresponds to 48 to 571; it reads MEASTPGDLV…LVEILKEDGV (524 aa). N-linked (GlcNAc...) asparagine; by host glycosylation is present at Asn119. The interval 124–152 is important for interaction with fusion/F protein; it reads GAPVHDPDYIGGIGKELIVDDASDVTSFY. 3 cysteine pairs are disulfide-bonded: Cys172–Cys196, Cys186–Cys247, and Cys238–Cys251. The involved in neuraminidase activity stretch occupies residues 234–239; sequence NRKSCS. 2 N-linked (GlcNAc...) asparagine; by host glycosylation sites follow: Asn341 and Asn433. 2 disulfides stabilise this stretch: Cys344/Cys461 and Cys455/Cys465. Asn481, Asn508, and Asn538 each carry an N-linked (GlcNAc...) asparagine; by host glycan. A disulfide bond links Cys531 and Cys542.

Belongs to the paramyxoviruses hemagglutinin-neuraminidase family. Homotetramer; composed of disulfide-linked homodimers. Interacts with F protein trimer. Interacts with host CG-1B; this interaction inhibits viral adsorption and replication rather than internalization.

It localises to the virion membrane. The protein localises to the host cell membrane. It carries out the reaction Hydrolysis of alpha-(2-&gt;3)-, alpha-(2-&gt;6)-, alpha-(2-&gt;8)- glycosidic linkages of terminal sialic acid residues in oligosaccharides, glycoproteins, glycolipids, colominic acid and synthetic substrates.. Its function is as follows. Mediates the viral entry into the host cell together with fusion/F protein. Attaches the virus to sialic acid-containing cell receptors and thereby initiates infection. Binding of HN protein to the receptor induces a conformational change that allows the F protein to trigger virion/cell membranes fusion. Functionally, neuraminidase activity ensures the efficient spread of the virus by dissociating the mature virions from the neuraminic acid containing glycoproteins. This Gallus gallus (Chicken) protein is Hemagglutinin-neuraminidase (HN).